Reading from the N-terminus, the 512-residue chain is ATP synthase subunit alpha (512 aa).

169–176 (GDRQTGKT) contributes to the ATP binding site.

It belongs to the ATPase alpha/beta chains family. As to quaternary structure, F-type ATPases have 2 components, CF(1) - the catalytic core - and CF(0) - the membrane proton channel. CF(1) has five subunits: alpha(3), beta(3), gamma(1), delta(1), epsilon(1). CF(0) has three main subunits: a(1), b(2) and c(9-12). The alpha and beta chains form an alternating ring which encloses part of the gamma chain. CF(1) is attached to CF(0) by a central stalk formed by the gamma and epsilon chains, while a peripheral stalk is formed by the delta and b chains.

Its subcellular location is the cell inner membrane. The enzyme catalyses ATP + H2O + 4 H(+)(in) = ADP + phosphate + 5 H(+)(out). In terms of biological role, produces ATP from ADP in the presence of a proton gradient across the membrane. The alpha chain is a regulatory subunit. The protein is ATP synthase subunit alpha of Rickettsia akari (strain Hartford).